The sequence spans 900 residues: Nuclear factor NF-kappa-B p100 subunit (900 aa).

Ser-23 and Ser-161 each carry phosphoserine. The region spanning 38–343 (PYLVIVEQPK…EVQRKRRKAL (306 aa)) is the RHD domain. The Nuclear localization signal signature appears at 337 to 341 (RKRRK). Residues 346–377 (FSQPFGGGSHMGGGSGGAAGGYGGAGGGGSLG) are GRR. A disordered region spans residues 404–435 (GAQMAATVPSRDSGEEAAEPSAPSRTPQCEPQ). Thr-429 carries the phosphothreonine modification. ANK repeat units lie at residues 487–519 (NGDT…DLGV), 526–555 (LHQT…DPAL), 559–591 (HGDS…AVPQ), 599–628 (EGLY…EVEA), 633–663 (GGRT…NVNA), and 667–696 (AGNT…DIHA). The disordered stretch occupies residues 698 to 734 (NEEPLCPLPSPPTSDSDSDSEGPEKDTRSSFRGHTPL). A phosphoserine mark is found at Ser-713, Ser-715, and Ser-717. Residues 729–758 (RGHTPLDLTCSTKVKTLLLNAAQNTMEPPL) form an ANK 7 repeat. The Death domain occupies 764–851 (AGPGLSLGDT…EGVRLLRGPE (88 aa)). Position 812 is a phosphoserine (Ser-812). Residues 849 to 866 (GPETRDKLPSTAEVKEDS) are compositionally biased toward basic and acidic residues. The segment at 849–900 (GPETRDKLPSTAEVKEDSAYGSQSVEQEAEKLGPPPEPPGGLCHGHPQPQVH) is disordered. Lys-855 is covalently cross-linked (Glycyl lysine isopeptide (Lys-Gly) (interchain with G-Cter in ubiquitin)). Ser-866 and Ser-870 each carry phosphoserine; by MAP3K14. Residues 888-900 (GGLCHGHPQPQVH) are compositionally biased toward low complexity.

In terms of assembly, component of the NF-kappa-B RelB-p52 complex. Homodimer; component of the NF-kappa-B p52-p52 complex. Component of the NF-kappa-B p65-p52 complex. Component of the NF-kappa-B p52-c-Rel complex. NFKB2/p52 interacts with NFKBIE. Component of a complex consisting of the NF-kappa-B p50-p50 homodimer and BCL3. Directly interacts with MEN1. In terms of processing, while translation occurs, the particular unfolded structure after the GRR repeat promotes the generation of p52 making it an acceptable substrate for the proteasome. This process is known as cotranslational processing. The processed form is active and the unprocessed form acts as an inhibitor (I kappa B-like), being able to form cytosolic complexes with NF-kappa B, trapping it in the cytoplasm. Complete folding of the region downstream of the GRR repeat precludes processing. Post-translationally, subsequent to MAP3K14-dependent serine phosphorylation, p100 polyubiquitination occurs then triggering its proteasome-dependent processing. Constitutive processing is tightly suppressed by its C-terminal processing inhibitory domain, named PID, which contains the death domain. In terms of processing, ubiquitinated by TRIM55; leading to processing by VCP and subsequent ubiquitin-dependent protein degradation by the proteasome.

Its subcellular location is the nucleus. The protein resides in the cytoplasm. In terms of biological role, NF-kappa-B is a pleiotropic transcription factor present in almost all cell types and is the endpoint of a series of signal transduction events that are initiated by a vast array of stimuli related to many biological processes such as inflammation, immunity, differentiation, cell growth, tumorigenesis and apoptosis. NF-kappa-B is a homo- or heterodimeric complex formed by the Rel-like domain-containing proteins RELA/p65, RELB, NFKB1/p105, NFKB1/p50, REL and NFKB2/p52. The dimers bind at kappa-B sites in the DNA of their target genes and the individual dimers have distinct preferences for different kappa-B sites that they can bind with distinguishable affinity and specificity. Different dimer combinations act as transcriptional activators or repressors, respectively. NF-kappa-B is controlled by various mechanisms of post-translational modification and subcellular compartmentalization as well as by interactions with other cofactors or corepressors. NF-kappa-B complexes are held in the cytoplasm in an inactive state complexed with members of the NF-kappa-B inhibitor (I-kappa-B) family. In a conventional activation pathway, I-kappa-B is phosphorylated by I-kappa-B kinases (IKKs) in response to different activators, subsequently degraded thus liberating the active NF-kappa-B complex which translocates to the nucleus. In a non-canonical activation pathway, the MAP3K14-activated CHUK/IKKA homodimer phosphorylates NFKB2/p100 associated with RelB, inducing its proteolytic processing to NFKB2/p52 and the formation of NF-kappa-B RelB-p52 complexes. The NF-kappa-B heterodimeric RelB-p52 complex is a transcriptional activator. The NF-kappa-B p52-p52 homodimer is a transcriptional repressor. NFKB2 appears to have dual functions such as cytoplasmic retention of attached NF-kappa-B proteins by p100 and generation of p52 by a cotranslational processing. The proteasome-mediated process ensures the production of both p52 and p100 and preserves their independent function. p52 binds to the kappa-B consensus sequence 5'-GGRNNYYCC-3', located in the enhancer region of genes involved in immune response and acute phase reactions. p52 and p100 are respectively the minor and major form; the processing of p100 being relatively poor. Isoform p49 is a subunit of the NF-kappa-B protein complex, which stimulates the HIV enhancer in synergy with p65. In concert with RELB, regulates the circadian clock by repressing the transcriptional activator activity of the CLOCK-BMAL1 heterodimer. This Homo sapiens (Human) protein is Nuclear factor NF-kappa-B p100 subunit (NFKB2).